A 709-amino-acid polypeptide reads, in one-letter code: Phosphoribosylformylglycinamidine synthase subunit PurL (709 aa).

Residue histidine 36 is part of the active site. ATP-binding residues include tyrosine 39 and lysine 80. Mg(2+) is bound at residue glutamate 82. Substrate is bound by residues 83–86 (SHNH) and arginine 105. Residue histidine 84 is the Proton acceptor of the active site. Aspartate 106 contacts Mg(2+). Glutamine 226 lines the substrate pocket. Mg(2+) is bound at residue aspartate 252. 294–296 (ETQ) is a substrate binding site. Residues aspartate 470 and glycine 507 each contribute to the ATP site. A substrate-binding site is contributed by serine 510.

Belongs to the FGAMS family. Monomer. Part of the FGAM synthase complex composed of 1 PurL, 1 PurQ and 2 PurS subunits.

The protein localises to the cytoplasm. It carries out the reaction N(2)-formyl-N(1)-(5-phospho-beta-D-ribosyl)glycinamide + L-glutamine + ATP + H2O = 2-formamido-N(1)-(5-O-phospho-beta-D-ribosyl)acetamidine + L-glutamate + ADP + phosphate + H(+). Its pathway is purine metabolism; IMP biosynthesis via de novo pathway; 5-amino-1-(5-phospho-D-ribosyl)imidazole from N(2)-formyl-N(1)-(5-phospho-D-ribosyl)glycinamide: step 1/2. Functionally, part of the phosphoribosylformylglycinamidine synthase complex involved in the purines biosynthetic pathway. Catalyzes the ATP-dependent conversion of formylglycinamide ribonucleotide (FGAR) and glutamine to yield formylglycinamidine ribonucleotide (FGAM) and glutamate. The FGAM synthase complex is composed of three subunits. PurQ produces an ammonia molecule by converting glutamine to glutamate. PurL transfers the ammonia molecule to FGAR to form FGAM in an ATP-dependent manner. PurS interacts with PurQ and PurL and is thought to assist in the transfer of the ammonia molecule from PurQ to PurL. This chain is Phosphoribosylformylglycinamidine synthase subunit PurL, found in Saccharolobus islandicus (strain M.14.25 / Kamchatka #1) (Sulfolobus islandicus).